Consider the following 153-residue polypeptide: Large ribosomal subunit protein uL15 (153 aa).

Positions 1–40 are enriched in basic residues; that stretch reads MTDKKRRQRGSRTHGGGTHKNRRGAGNRGGRGRAGRKKHE. The interval 1–60 is disordered; it reads MTDKKRRQRGSRTHGGGTHKNRRGAGNRGGRGRAGRKKHEQHNYEDVGKSGFKRPEKTDR. Residues 41-60 are compositionally biased toward basic and acidic residues; that stretch reads QHNYEDVGKSGFKRPEKTDR.

This sequence belongs to the universal ribosomal protein uL15 family. As to quaternary structure, part of the 50S ribosomal subunit.

Functionally, binds to the 23S rRNA. This chain is Large ribosomal subunit protein uL15, found in Halobacterium salinarum (strain ATCC 29341 / DSM 671 / R1).